Here is a 314-residue protein sequence, read N- to C-terminus: MLDFEKPLFEIRNKIDSLKESQEKNEVDLQDEIDMLEASLKRETTKVYTNLKPWDRVQIARLPERPTTLDYIPYIFDSFIELHGDRSFRDDPAMIGGIGYLDGKSVTVIGQQRGKDTKDNIYRNFGMAHPEGYRKALRLMKQAEKFNRPIFTFIDTKGAYPGKAAEERGQSESIAKNLMEMASLTVPVIAVVIGEGGSGGALGIGISNRVLMLENSTYSVISPEGAAALLWKDSNLAQIAAETMKITAHDLLDLGIIDEVINEPLGGAQKDEEAQALSIKKMFLKHLNELKQLTPEELANDRFEKFRKIGSVVE.

Positions 32-289 (EIDMLEASLK…KKMFLKHLNE (258 aa)) constitute a CoA carboxyltransferase C-terminal domain.

The protein belongs to the AccA family. Acetyl-CoA carboxylase is a heterohexamer composed of biotin carboxyl carrier protein (AccB), biotin carboxylase (AccC) and two subunits each of ACCase subunit alpha (AccA) and ACCase subunit beta (AccD).

Its subcellular location is the cytoplasm. The catalysed reaction is N(6)-carboxybiotinyl-L-lysyl-[protein] + acetyl-CoA = N(6)-biotinyl-L-lysyl-[protein] + malonyl-CoA. It functions in the pathway lipid metabolism; malonyl-CoA biosynthesis; malonyl-CoA from acetyl-CoA: step 1/1. Functionally, component of the acetyl coenzyme A carboxylase (ACC) complex. First, biotin carboxylase catalyzes the carboxylation of biotin on its carrier protein (BCCP) and then the CO(2) group is transferred by the carboxyltransferase to acetyl-CoA to form malonyl-CoA. The protein is Acetyl-coenzyme A carboxylase carboxyl transferase subunit alpha of Staphylococcus epidermidis (strain ATCC 35984 / DSM 28319 / BCRC 17069 / CCUG 31568 / BM 3577 / RP62A).